We begin with the raw amino-acid sequence, 67 residues long: Lantibiotic Flvbeta.b (67 aa).

The propeptide at 1–34 is cleaved by FlvT; sequence MDNNTKLQKLYEQLAATGSEKELDAMLDENMAGA. Ser36 carries the post-translational modification 2,3-didehydroalanine (Ser); by FlvM2. Thr39 and Thr43 each carry 2,3-didehydrobutyrine; by FlvM2. 3 consecutive cross-links (beta-methyllanthionine (Thr-Cys); by FlvM2) follow at residues 50–56, 58–61, and 62–65; these read TTGFDWC, TGAC, and TYSC.

In terms of processing, contains DL-beta-methyllanthionine, when coepressed in E.coli with the flavecin synthetase FlvM2.

It localises to the secreted. Its function is as follows. Lanthionine-containing peptide antibiotic (lantibiotic) only active on Gram-positive bacteria in synergy with Flvalpha.a. Is not active in absence of Flvalpha.a, which is encoded by the same operon than Flvbeta.b. The bactericidal activity of lantibiotics is based on depolarization of energized bacterial cytoplasmic membranes, initiated by the formation of aqueous transmembrane pores. The polypeptide is Lantibiotic Flvbeta.b (Ruminococcus flavefaciens).